Here is a 333-residue protein sequence, read N- to C-terminus: tRNA N6-adenosine threonylcarbamoyltransferase (333 aa).

Fe cation-binding residues include His111 and His115. Substrate-binding positions include 134–138 (LVSGG), Asp167, Gly180, and Asn272. Asp300 serves as a coordination point for Fe cation.

Belongs to the KAE1 / TsaD family. It depends on Fe(2+) as a cofactor.

Its subcellular location is the cytoplasm. It catalyses the reaction L-threonylcarbamoyladenylate + adenosine(37) in tRNA = N(6)-L-threonylcarbamoyladenosine(37) in tRNA + AMP + H(+). Functionally, required for the formation of a threonylcarbamoyl group on adenosine at position 37 (t(6)A37) in tRNAs that read codons beginning with adenine. Is involved in the transfer of the threonylcarbamoyl moiety of threonylcarbamoyl-AMP (TC-AMP) to the N6 group of A37, together with TsaE and TsaB. TsaD likely plays a direct catalytic role in this reaction. The chain is tRNA N6-adenosine threonylcarbamoyltransferase from Legionella pneumophila (strain Corby).